Consider the following 405-residue polypeptide: MATEQTAITRATFDEVILPVYAPADFIPVKGKGSRVWDQQGKEYIDFAGGIAVTALGHCHPALVEALKSQGETLWHTSNVFTNEPALCLGRKLIDATFAERVLFMNSGTEANETAFKLARHYACVRHSPFKTKIIAFQNAFHGRSLFTVSVGGQPKYSDGFGPKPADIIHVPFNDLHAVKAVMDDHTCAVVVEPIQGEGGVQAATPEFLKGLRDLCDKHQALLVFDEVQCGMGRTGDLFAYMHYGVTPDILTSAKALGGGFPVSAMLTTQEIASAFHVGSHGSTYGGNPLACAVAGAAFDIINTPEVLQGIHTKRQQFVQHLQAIDEQFDIFSDIRGMGLLIGAELKPKYKGRARDFLYAGAEAGVMVLNAGADVMRFAPSLVVEEADINEGMQRFAQAVGKVVA.

Residues 108-109 (GT) and F141 each bind pyridoxal 5'-phosphate. R144 lines the N(2)-acetyl-L-ornithine pocket. 226–229 (DEVQ) contacts pyridoxal 5'-phosphate. An N6-(pyridoxal phosphate)lysine modification is found at K255. S283 provides a ligand contact to N(2)-acetyl-L-ornithine. T284 contacts pyridoxal 5'-phosphate.

This sequence belongs to the class-III pyridoxal-phosphate-dependent aminotransferase family. ArgD subfamily. In terms of assembly, homodimer. Pyridoxal 5'-phosphate is required as a cofactor.

The protein resides in the cytoplasm. The catalysed reaction is N(2)-acetyl-L-ornithine + 2-oxoglutarate = N-acetyl-L-glutamate 5-semialdehyde + L-glutamate. It carries out the reaction N-succinyl-(2S,6S)-2,6-diaminopimelate + 2-oxoglutarate = (S)-2-succinylamino-6-oxoheptanedioate + L-glutamate. Its pathway is amino-acid biosynthesis; L-arginine biosynthesis; N(2)-acetyl-L-ornithine from L-glutamate: step 4/4. It functions in the pathway amino-acid biosynthesis; L-lysine biosynthesis via DAP pathway; LL-2,6-diaminopimelate from (S)-tetrahydrodipicolinate (succinylase route): step 2/3. Functionally, involved in both the arginine and lysine biosynthetic pathways. The protein is Acetylornithine/succinyldiaminopimelate aminotransferase of Salmonella typhi.